The primary structure comprises 365 residues: Phosphatidylcholine:ceramide cholinephosphotransferase 2 (365 aa).

Basic and acidic residues predominate over residues 1-14 (MDIIETAKLEEHLE). The disordered stretch occupies residues 1–52 (MDIIETAKLEEHLENQPSDPTNTYTRPTEPVEEENKNGNGKPKSLSSGLRKG). The segment covering 15-26 (NQPSDPTNTYTR) has biased composition (polar residues). A run of 5 helical transmembrane segments spans residues 80 to 100 (GIAF…ITVV), 128 to 148 (FSVS…QWLF), 159 to 179 (FCFI…VTTL), 218 to 240 (HILC…YLFI), and 248 to 268 (FWWY…CILV). Histidine 229 is an active-site residue. Active-site residues include histidine 272 and aspartate 276. A helical transmembrane segment spans residues 273–290 (YTVDVIIAYYITTRLFWW). The Cytoplasmic portion of the chain corresponds to 291-365 (YHSMANEKNL…KIGEDNEKST (75 aa)). Residues cysteine 331, cysteine 332, cysteine 343, and cysteine 348 are each lipidated (S-palmitoyl cysteine).

It belongs to the sphingomyelin synthase family. In terms of processing, palmitoylated on Cys-331, Cys-332, Cys-343 and Cys-348; which plays an important role in plasma membrane localization.

It is found in the cell membrane. The protein resides in the golgi apparatus membrane. It catalyses the reaction an N-acylsphing-4-enine + a 1,2-diacyl-sn-glycero-3-phosphocholine = a sphingomyelin + a 1,2-diacyl-sn-glycerol. It carries out the reaction an N-acylsphinganine + a 1,2-diacyl-sn-glycero-3-phosphocholine = an N-acylsphinganine-1-phosphocholine + a 1,2-diacyl-sn-glycerol. The enzyme catalyses an N-acyl-(4R)-4-hydroxysphinganine + a 1,2-diacyl-sn-glycero-3-phosphocholine = an N-acyl-(4R)-4-hydroxysphinganine-phosphocholine + a 1,2-diacyl-sn-glycerol. The catalysed reaction is an N-acylsphing-4-enine + a 1,2-diacyl-sn-glycero-3-phosphoethanolamine = an N-acylsphing-4-enine 1-phosphoethanolamine + a 1,2-diacyl-sn-glycerol. It catalyses the reaction an N-acylsphinganine + a 1,2-diacyl-sn-glycero-3-phosphoethanolamine = an N-acylsphinganine-1-phosphoethanolamine + a 1,2-diacyl-sn-glycerol. It carries out the reaction an N-acyl-(4R)-4-hydroxysphinganine + a 1,2-diacyl-sn-glycero-3-phosphoethanolamine = an N-acyl-(4R)-4-hydroxysphinganine-1-phosphoethanolamine + a 1,2-diacyl-sn-glycerol. The enzyme catalyses 1,2-dihexadecanoyl-sn-glycero-3-phosphocholine + an N-acylsphing-4-enine = 1,2-dihexadecanoyl-sn-glycerol + a sphingomyelin. The catalysed reaction is 1-(9Z-octadecenoyl)-2-acyl-sn-3-glycerol + a sphingomyelin = a 1-(9Z-octadecenoyl)-2-acyl-sn-glycero-3-phosphocholine + an N-acylsphing-4-enine. It catalyses the reaction N-hexadecanoylsphinganine + a 1,2-diacyl-sn-glycero-3-phosphocholine = N-hexadecanoyl-sphinganine-1-phosphocholine + a 1,2-diacyl-sn-glycerol. It carries out the reaction N-hexadecanoyl-(4R)-hydroxysphinganine + a 1,2-diacyl-sn-glycero-3-phosphocholine = N-hexadecanoyl-(4R)-hydroxysphinganine-phosphocholine + a 1,2-diacyl-sn-glycerol. The enzyme catalyses N-hexadecanoylsphinganine + a 1,2-diacyl-sn-glycero-3-phosphoethanolamine = N-hexadecanoyl-sphinganine-1-phosphoethanolamine + a 1,2-diacyl-sn-glycerol. The catalysed reaction is N-hexadecanoyl-(4R)-hydroxysphinganine + a 1,2-diacyl-sn-glycero-3-phosphoethanolamine = N-hexadecanoyl-(4R)-hydroxysphinganine-1-phosphoethanolamine + a 1,2-diacyl-sn-glycerol. It functions in the pathway sphingolipid metabolism. Sphingomyelin synthase that primarily contributes to sphingomyelin synthesis and homeostasis at the plasma membrane. Catalyzes the reversible transfer of phosphocholine moiety in sphingomyelin biosynthesis: in the forward reaction transfers phosphocholine head group of phosphatidylcholine (PC) on to ceramide (CER) to form ceramide phosphocholine (sphingomyelin, SM) and diacylglycerol (DAG) as by-product, and in the reverse reaction transfers phosphocholine from SM to DAG to form PC and CER. The direction of the reaction appears to depend on the levels of CER and DAG in the plasma membrane. Does not use free phosphorylcholine or CDP-choline as donors. Can also transfer phosphoethanolamine head group of phosphatidylethanolamine (PE) on to ceramide (CER) to form ceramide phosphoethanolamine (CPE). Regulates receptor-mediated signal transduction via mitogenic DAG and proapoptotic CER, as well as via SM, a structural component of membrane rafts that serve as platforms for signal transduction and protein sorting. To a lesser extent, plays a role in secretory transport via regulation of DAG pool at the Golgi apparatus and its downstream effects on PRKD1. Required for normal bone matrix mineralization. The sequence is that of Phosphatidylcholine:ceramide cholinephosphotransferase 2 (SGMS2) from Macaca fascicularis (Crab-eating macaque).